Here is a 214-residue protein sequence, read N- to C-terminus: RNA-free ribonuclease P (214 aa).

Belongs to the HARP family.

The enzyme catalyses Endonucleolytic cleavage of RNA, removing 5'-extranucleotides from tRNA precursor.. Its function is as follows. RNA-free RNase P that catalyzes the removal of the 5'-leader sequence from pre-tRNA to produce the mature 5'-terminus. The polypeptide is RNA-free ribonuclease P (Aeropyrum pernix (strain ATCC 700893 / DSM 11879 / JCM 9820 / NBRC 100138 / K1)).